Consider the following 129-residue polypeptide: Small ribosomal subunit protein bS6 (129 aa).

Positions 100–129 (SIMLKQKEERAPRREERSEAKPEAKSEAAE) are disordered. Positions 104–129 (KQKEERAPRREERSEAKPEAKSEAAE) are enriched in basic and acidic residues.

It belongs to the bacterial ribosomal protein bS6 family.

Its function is as follows. Binds together with bS18 to 16S ribosomal RNA. The sequence is that of Small ribosomal subunit protein bS6 from Vibrio parahaemolyticus serotype O3:K6 (strain RIMD 2210633).